Reading from the N-terminus, the 1383-residue chain is DNA-directed RNA polymerase subunit beta'' (1383 aa).

Zn(2+)-binding residues include C220, C289, C296, and C299.

Belongs to the RNA polymerase beta' chain family. RpoC2 subfamily. In terms of assembly, in plastids the minimal PEP RNA polymerase catalytic core is composed of four subunits: alpha, beta, beta', and beta''. When a (nuclear-encoded) sigma factor is associated with the core the holoenzyme is formed, which can initiate transcription. Requires Zn(2+) as cofactor.

It is found in the plastid. Its subcellular location is the chloroplast. It catalyses the reaction RNA(n) + a ribonucleoside 5'-triphosphate = RNA(n+1) + diphosphate. In terms of biological role, DNA-dependent RNA polymerase catalyzes the transcription of DNA into RNA using the four ribonucleoside triphosphates as substrates. The chain is DNA-directed RNA polymerase subunit beta'' from Oenothera argillicola (Appalachian evening primrose).